We begin with the raw amino-acid sequence, 116 residues long: NADPH-dependent 7-cyano-7-deazaguanine reductase (116 aa).

C31 functions as the Thioimide intermediate in the catalytic mechanism. The Proton donor role is filled by D38. Residues 53-55 (IEL) and 72-73 (YE) contribute to the substrate site.

Belongs to the GTP cyclohydrolase I family. QueF type 1 subfamily.

Its subcellular location is the cytoplasm. The catalysed reaction is 7-aminomethyl-7-carbaguanine + 2 NADP(+) = 7-cyano-7-deazaguanine + 2 NADPH + 3 H(+). Its pathway is tRNA modification; tRNA-queuosine biosynthesis. In terms of biological role, catalyzes the NADPH-dependent reduction of 7-cyano-7-deazaguanine (preQ0) to 7-aminomethyl-7-deazaguanine (preQ1). The chain is NADPH-dependent 7-cyano-7-deazaguanine reductase from Pelodictyon phaeoclathratiforme (strain DSM 5477 / BU-1).